The sequence spans 79 residues: UPF0180 protein BcerKBAB4_1316 (79 aa).

It belongs to the UPF0180 family.

This is UPF0180 protein BcerKBAB4_1316 from Bacillus mycoides (strain KBAB4) (Bacillus weihenstephanensis).